The sequence spans 219 residues: Ribosomal RNA small subunit methyltransferase G (219 aa).

S-adenosyl-L-methionine is bound by residues Gly-85, Leu-90, 136 to 137 (VE), and Arg-151.

It belongs to the methyltransferase superfamily. RNA methyltransferase RsmG family.

It is found in the cytoplasm. It catalyses the reaction guanosine(527) in 16S rRNA + S-adenosyl-L-methionine = N(7)-methylguanosine(527) in 16S rRNA + S-adenosyl-L-homocysteine. Its function is as follows. Specifically methylates the N7 position of guanine in position 527 of 16S rRNA. The protein is Ribosomal RNA small subunit methyltransferase G of Cellvibrio japonicus (strain Ueda107) (Pseudomonas fluorescens subsp. cellulosa).